Here is a 204-residue protein sequence, read N- to C-terminus: 8-oxoguanine DNA glycosylase/AP lyase (204 aa).

Residues Lys129 and Asp147 contribute to the active site.

This sequence belongs to the type-2 OGG1 family.

The catalysed reaction is 2'-deoxyribonucleotide-(2'-deoxyribose 5'-phosphate)-2'-deoxyribonucleotide-DNA = a 3'-end 2'-deoxyribonucleotide-(2,3-dehydro-2,3-deoxyribose 5'-phosphate)-DNA + a 5'-end 5'-phospho-2'-deoxyribonucleoside-DNA + H(+). In terms of biological role, catalyzes the excision of an oxidatively damaged form of guanine (7,8-dihydro-8-oxoguanine = 8-oxoG) from DNA. Also cleaves the DNA backbone at apurinic/apyrimidinic sites (AP sites). The sequence is that of 8-oxoguanine DNA glycosylase/AP lyase from Thermoplasma acidophilum (strain ATCC 25905 / DSM 1728 / JCM 9062 / NBRC 15155 / AMRC-C165).